Consider the following 437-residue polypeptide: 3-phosphoshikimate 1-carboxyvinyltransferase (437 aa).

Residues Lys-26, Ser-27, and Arg-31 each coordinate 3-phosphoshikimate. Phosphoenolpyruvate is bound at residue Lys-26. Gly-99 and Arg-127 together coordinate phosphoenolpyruvate. 4 residues coordinate 3-phosphoshikimate: Ser-172, Gln-174, Asp-320, and Lys-347. Phosphoenolpyruvate is bound at residue Gln-174. Residue Asp-320 is the Proton acceptor of the active site. Phosphoenolpyruvate contacts are provided by Arg-351 and Arg-392.

Belongs to the EPSP synthase family. As to quaternary structure, monomer.

It localises to the cytoplasm. It carries out the reaction 3-phosphoshikimate + phosphoenolpyruvate = 5-O-(1-carboxyvinyl)-3-phosphoshikimate + phosphate. It participates in metabolic intermediate biosynthesis; chorismate biosynthesis; chorismate from D-erythrose 4-phosphate and phosphoenolpyruvate: step 6/7. Catalyzes the transfer of the enolpyruvyl moiety of phosphoenolpyruvate (PEP) to the 5-hydroxyl of shikimate-3-phosphate (S3P) to produce enolpyruvyl shikimate-3-phosphate and inorganic phosphate. The protein is 3-phosphoshikimate 1-carboxyvinyltransferase of Methylococcus capsulatus (strain ATCC 33009 / NCIMB 11132 / Bath).